A 379-amino-acid polypeptide reads, in one-letter code: Cytochrome b (379 aa).

The next 4 membrane-spanning stretches (helical) occupy residues 33-53 (FGSL…FLAM), 77-98 (WFLR…YLHI), 113-133 (WNVG…GYVL), and 178-198 (FFTF…IHLL). 2 residues coordinate heme b: His83 and His97. Positions 182 and 196 each coordinate heme b. His201 contributes to the a ubiquinone binding site. The next 4 membrane-spanning stretches (helical) occupy residues 226–246 (YKDL…TLFS), 288–308 (LGGV…PITH), 320–340 (LTQI…WIGG), and 347–367 (FIII…VFAP).

Belongs to the cytochrome b family. In terms of assembly, the cytochrome bc1 complex contains 3 respiratory subunits (MT-CYB, CYC1 and UQCRFS1), 2 core proteins (UQCRC1 and UQCRC2) and probably 6 low-molecular weight proteins. The cofactor is heme b.

The protein resides in the mitochondrion inner membrane. Functionally, component of the ubiquinol-cytochrome c reductase complex (complex III or cytochrome b-c1 complex) that is part of the mitochondrial respiratory chain. The b-c1 complex mediates electron transfer from ubiquinol to cytochrome c. Contributes to the generation of a proton gradient across the mitochondrial membrane that is then used for ATP synthesis. This Amia calva (Bowfin) protein is Cytochrome b (mt-cyb).